The sequence spans 142 residues: Small ribosomal subunit protein uS12 (142 aa).

The disordered stretch occupies residues 1 to 44 (MTNGKYAARKLKKDRQQRRWSDSEYARRERGLGKKSDPLEGAPQ). Positions 7–16 (AARKLKKDRQ) are enriched in basic residues. Residues 17-38 (QRRWSDSEYARRERGLGKKSDP) show a composition bias toward basic and acidic residues.

The protein belongs to the universal ribosomal protein uS12 family. As to quaternary structure, part of the 30S ribosomal subunit.

With S4 and S5 plays an important role in translational accuracy. Located at the interface of the 30S and 50S subunits. This Halobacterium salinarum (strain ATCC 29341 / DSM 671 / R1) protein is Small ribosomal subunit protein uS12.